A 68-amino-acid polypeptide reads, in one-letter code: Protein transport protein Sec61 subunit gamma (68 aa).

The Cytoplasmic segment spans residues 1–32; sequence MDQVMQFVEPSRQFVKDSIRLVKRCTKPDRKE. Residues 33–61 traverse the membrane as a helical segment; the sequence is FQKIAMATAIGFAIMGFIGFFVKLIHIPI. At 62–68 the chain is on the extracellular side; the sequence is NNIIVGS.

Belongs to the SecE/SEC61-gamma family. The SEC61 channel-forming translocon complex consists of channel-forming core components SEC61A1, SEC61B and SEC61G and different auxiliary components such as SEC62 and SEC63. The SEC61 channel associates with the multi-pass translocon (MPT) complex.

The protein localises to the endoplasmic reticulum membrane. Component of SEC61 channel-forming translocon complex that mediates transport of signal peptide-containing precursor polypeptides across the endoplasmic reticulum (ER). Forms a ribosome receptor and a gated pore in the ER membrane, both functions required for cotranslational translocation of nascent polypeptides. The SEC61 channel is also involved in ER membrane insertion of transmembrane proteins: it mediates membrane insertion of the first few transmembrane segments of proteins, while insertion of subsequent transmembrane regions of multi-pass membrane proteins is mediated by the multi-pass translocon (MPT) complex. In Xenopus laevis (African clawed frog), this protein is Protein transport protein Sec61 subunit gamma (sec61g).